We begin with the raw amino-acid sequence, 190 residues long: Putative glutathione-dependent formaldehyde-activating enzyme (190 aa).

The CENP-V/GFA domain maps to 19–165; it reads FKGGKLYCHC…FRKVGLQPYD (147 aa). Cysteine 26, cysteine 28, cysteine 47, cysteine 49, cysteine 52, cysteine 94, and cysteine 97 together coordinate Zn(2+).

This sequence belongs to the Gfa family. Zn(2+) serves as cofactor.

It carries out the reaction S-(hydroxymethyl)glutathione = glutathione + formaldehyde. It participates in one-carbon metabolism; formaldehyde degradation; formate from formaldehyde (glutathione route): step 1/3. In terms of biological role, catalyzes the condensation of formaldehyde and glutathione to S-hydroxymethylglutathione. This Pyrenophora teres f. teres (strain 0-1) (Barley net blotch fungus) protein is Putative glutathione-dependent formaldehyde-activating enzyme.